The primary structure comprises 236 residues: MSYNLTDPYEIARFIKESKKSTPVKVYVNGDLSNAEMNDVEWYGSNGFYILMGESDSITKIVLDNKHLIKHFRIENDRRNSAIPMLDLLEVDARIEPGAIIRDKVTIGKNAVIMMGAVINIGAEIGDGTMVDMNAVVGARGQLGKNVHLGAGAVVAGVLEPPSKEPCMIGDNALIGANSVILEGVKIGAGSVVAAGSVVTEDVPDNVVVAGSPAKIIKAVDDKTKDKTQILDDLRK.

Belongs to the transferase hexapeptide repeat family. DapH subfamily.

The enzyme catalyses (S)-2,3,4,5-tetrahydrodipicolinate + acetyl-CoA + H2O = L-2-acetamido-6-oxoheptanedioate + CoA. It participates in amino-acid biosynthesis; L-lysine biosynthesis via DAP pathway; LL-2,6-diaminopimelate from (S)-tetrahydrodipicolinate (acetylase route): step 1/3. Functionally, catalyzes the transfer of an acetyl group from acetyl-CoA to tetrahydrodipicolinate. The sequence is that of 2,3,4,5-tetrahydropyridine-2,6-dicarboxylate N-acetyltransferase from Clostridium beijerinckii (strain ATCC 51743 / NCIMB 8052) (Clostridium acetobutylicum).